An 89-amino-acid polypeptide reads, in one-letter code: Exodeoxyribonuclease 7 small subunit (89 aa).

The segment at M1–E22 is disordered.

It belongs to the XseB family. As to quaternary structure, heterooligomer composed of large and small subunits.

The protein resides in the cytoplasm. It carries out the reaction Exonucleolytic cleavage in either 5'- to 3'- or 3'- to 5'-direction to yield nucleoside 5'-phosphates.. In terms of biological role, bidirectionally degrades single-stranded DNA into large acid-insoluble oligonucleotides, which are then degraded further into small acid-soluble oligonucleotides. This chain is Exodeoxyribonuclease 7 small subunit, found in Nitrosomonas europaea (strain ATCC 19718 / CIP 103999 / KCTC 2705 / NBRC 14298).